The primary structure comprises 250 residues: Hydroxyacylglutathione hydrolase (250 aa).

Zn(2+)-binding residues include H52, H54, D56, H57, H107, D128, and H166.

Belongs to the metallo-beta-lactamase superfamily. Glyoxalase II family. Monomer. Zn(2+) is required as a cofactor.

The enzyme catalyses an S-(2-hydroxyacyl)glutathione + H2O = a 2-hydroxy carboxylate + glutathione + H(+). Its pathway is secondary metabolite metabolism; methylglyoxal degradation; (R)-lactate from methylglyoxal: step 2/2. Functionally, thiolesterase that catalyzes the hydrolysis of S-D-lactoyl-glutathione to form glutathione and D-lactic acid. This is Hydroxyacylglutathione hydrolase from Neisseria gonorrhoeae (strain NCCP11945).